The following is a 120-amino-acid chain: Fumarate reductase subunit D (120 aa).

3 helical membrane passes run 25–45 (FAML…LGVI), 55–75 (VAGF…ISMP), and 100–120 (IACY…IFMI).

The protein belongs to the FrdD family. Part of an enzyme complex containing four subunits: a flavoprotein (FrdA), an iron-sulfur protein (FrdB), and two hydrophobic anchor proteins (FrdC and FrdD).

Its subcellular location is the cell inner membrane. Functionally, anchors the catalytic components of the fumarate reductase complex to the cell membrane, binds quinones. In Aliivibrio fischeri (strain MJ11) (Vibrio fischeri), this protein is Fumarate reductase subunit D.